A 551-amino-acid polypeptide reads, in one-letter code: Palmdelphin (551 aa).

The residue at position 1 (methionine 1) is an N-acetylmethionine. Residues 2–106 (EEAELVKERL…LQISTNEEAI (105 aa)) adopt a coiled-coil conformation. Lysine 125 participates in a covalent cross-link: Glycyl lysine isopeptide (Lys-Gly) (interchain with G-Cter in SUMO2). Position 135 is a phosphoserine (serine 135). Residue lysine 179 forms a Glycyl lysine isopeptide (Lys-Gly) (interchain with G-Cter in SUMO1); alternate linkage. A Glycyl lysine isopeptide (Lys-Gly) (interchain with G-Cter in SUMO2); alternate cross-link involves residue lysine 179. The span at 247-259 (SERNSKSPTEYHD) shows a compositional bias: basic and acidic residues. Disordered stretches follow at residues 247–393 (SERN…EDEE) and 450–529 (EEEE…IAGD). A Phosphothreonine modification is found at threonine 271. Phosphoserine is present on residues serine 321, serine 370, serine 384, and serine 385. Basic and acidic residues predominate over residues 484–495 (KRAEVNPHENTN). Phosphoserine occurs at positions 498, 515, and 520.

Belongs to the paralemmin family. Interacts with GLUL. Cell projection, dendrite. Cell projection, dendritic spine. Post-translationally, phosphorylated.

The protein localises to the cytoplasm. The protein resides in the cell projection. It localises to the dendrite. Its subcellular location is the dendritic spine. The sequence is that of Palmdelphin (PALMD) from Sus scrofa (Pig).